We begin with the raw amino-acid sequence, 531 residues long: Zinc finger protein 837 (531 aa).

A disordered region spans residues 1 to 101 (MEAPAQKAGQ…CGPTSSQNPE (101 aa)). Residues 24-50 (AREKRPEEPRPLEEDRAGSRPTQKGDL) show a composition bias toward basic and acidic residues. C2H2-type zinc fingers lie at residues 271 to 293 (YACD…QRIH), 299 to 321 (YECA…QKTH), 363 to 385 (YECA…RRVH), 391 to 413 (YACP…QRTH), 419 to 441 (YACP…QRAH), 447 to 469 (YGCS…ERLH), 475 to 497 (YICR…LRTH), and 503 to 525 (YACG…RKRH).

This sequence belongs to the krueppel C2H2-type zinc-finger protein family.

It is found in the nucleus. May be involved in transcriptional regulation. This is Zinc finger protein 837 (ZNF837) from Homo sapiens (Human).